Consider the following 331-residue polypeptide: 7,8-didemethyl-8-hydroxy-5-deazariboflavin synthase (331 aa).

Residues Ile6–Asn244 enclose the Radical SAM core domain. 3 residues coordinate [4Fe-4S] cluster: Cys20, Cys24, and Cys27.

It belongs to the radical SAM superfamily. CofG family. As to quaternary structure, consists of two subunits, CofG and CofH. [4Fe-4S] cluster is required as a cofactor.

The enzyme catalyses 5-amino-5-(4-hydroxybenzyl)-6-(D-ribitylimino)-5,6-dihydrouracil + S-adenosyl-L-methionine = 7,8-didemethyl-8-hydroxy-5-deazariboflavin + 5'-deoxyadenosine + L-methionine + NH4(+) + H(+). Its pathway is cofactor biosynthesis; coenzyme F0 biosynthesis. Catalyzes the radical-mediated synthesis of 7,8-didemethyl-8-hydroxy-5-deazariboflavin from 5-amino-5-(4-hydroxybenzyl)-6-(D-ribitylimino)-5,6-dihydrouracil. This is 7,8-didemethyl-8-hydroxy-5-deazariboflavin synthase from Methanoculleus marisnigri (strain ATCC 35101 / DSM 1498 / JR1).